A 450-amino-acid polypeptide reads, in one-letter code: Trigger factor (450 aa).

The PPIase FKBP-type domain occupies 161–246 (GDRVVIDFKG…VKTVEAPEYP (86 aa)). The disordered stretch occupies residues 422-450 (PMSLQELMSPQQPEAESAEGESKQDETKE). Basic and acidic residues predominate over residues 441-450 (GESKQDETKE).

The protein belongs to the FKBP-type PPIase family. Tig subfamily.

It is found in the cytoplasm. The catalysed reaction is [protein]-peptidylproline (omega=180) = [protein]-peptidylproline (omega=0). Involved in protein export. Acts as a chaperone by maintaining the newly synthesized protein in an open conformation. Functions as a peptidyl-prolyl cis-trans isomerase. This Alkalilimnicola ehrlichii (strain ATCC BAA-1101 / DSM 17681 / MLHE-1) protein is Trigger factor.